A 205-amino-acid polypeptide reads, in one-letter code: Colicin-E8 (205 aa).

2 disordered regions span residues 24-109 (AQTD…PDRI) and 136-187 (PELS…VYDM). Composition is skewed to basic and acidic residues over residues 53 to 76 (QERR…ESKR), 88 to 99 (PVGDKWLDDAGK), and 159 to 178 (RNKD…DKPI). Residues His-173, His-198, and His-202 each contribute to the Zn(2+) site.

It belongs to the colicin/pyosin nuclease family.

Its function is as follows. This plasmid-coded bactericidal protein is an endonuclease active on both single- and double-stranded DNA but with undefined specificity. Functionally, colicins are polypeptide toxins produced by and active against E.coli and closely related bacteria. The polypeptide is Colicin-E8 (col) (Escherichia coli).